We begin with the raw amino-acid sequence, 234 residues long: Sugar fermentation stimulation protein homolog (234 aa).

It belongs to the SfsA family.

This Shewanella frigidimarina (strain NCIMB 400) protein is Sugar fermentation stimulation protein homolog.